Here is a 348-residue protein sequence, read N- to C-terminus: Dihydroorotase (348 aa).

H13 and H15 together coordinate Zn(2+). Residues 15-17 (HLR) and N41 contribute to the substrate site. Residues K99, H136, and H174 each contribute to the Zn(2+) site. Position 99 is an N6-carboxylysine (K99). H136 contributes to the substrate binding site. Position 219 (L219) interacts with substrate. D247 contacts Zn(2+). Residue D247 is part of the active site. The substrate site is built by H251 and A263.

Belongs to the metallo-dependent hydrolases superfamily. DHOase family. Class II DHOase subfamily. In terms of assembly, homodimer. Requires Zn(2+) as cofactor.

It carries out the reaction (S)-dihydroorotate + H2O = N-carbamoyl-L-aspartate + H(+). It participates in pyrimidine metabolism; UMP biosynthesis via de novo pathway; (S)-dihydroorotate from bicarbonate: step 3/3. In terms of biological role, catalyzes the reversible cyclization of carbamoyl aspartate to dihydroorotate. The chain is Dihydroorotase from Rhizobium etli (strain ATCC 51251 / DSM 11541 / JCM 21823 / NBRC 15573 / CFN 42).